The chain runs to 516 residues: MGLHFKWPLGAPMLAAIYAMSMVLKMLPALGMACPPKCRCEKLLFYCDSQGFHSVPNATDKGSLGLSLRHNHITELERDQFASFSQLTWLHLDHNQISTVKEDAFQGLYKLKELILSSNKIFYLPNTTFTQLINLQNLDLSFNQLSSLHPELFYGLRKLQTLHLRSNSLRTIPVRLFWDCRSLEFLDLSTNRLRSLARNGFAGLIKLRELHLEHNQLTKINFAHFLRLSSLHTLFLQWNKISNLTCGMEWTWGTLEKLDLTGNEIKAIDLTVFETMPNLKILLMDNNKLNSLDSKILNSLRSLTTVGLSGNLWECSARICALASWLGSFQGRWEHSILCHSPDHTQGEDILDAVHGFQLCWNLSTTVTVMATTYRDPTTEYTKRISSSSYHVGDKEIPTTAGIAVTTEEHFPEPDNAIFTQRVITGTMALLFSFFFIIFIVFISRKCCPPTLRRIRQCSMVQNHRQLRSQTRLHMSNMSDQGPYNEYEPTHEGPFIIINGYGQCKCQQLPYKECEV.

A signal peptide spans 1–33 (MGLHFKWPLGAPMLAAIYAMSMVLKMLPALGMA). The LRRNT domain occupies 34 to 61 (CPPKCRCEKLLFYCDSQGFHSVPNATDK). At 34–422 (CPPKCRCEKL…EPDNAIFTQR (389 aa)) the chain is on the extracellular side. Asn-57 carries an N-linked (GlcNAc...) asparagine glycan. 10 LRR repeats span residues 63–83 (SLGL…QFAS), 86–107 (QLTW…AFQG), 110–131 (KLKE…TFTQ), 134–155 (NLQN…LFYG), 158–179 (KLQT…LFWD), 182–203 (SLEF…GFAG), 206–227 (KLRE…HFLR), 230–251 (SLHT…MEWT), 254–275 (TLEK…VFET), and 278–299 (NLKI…ILNS). The N-linked (GlcNAc...) asparagine glycan is linked to Asn-126. N-linked (GlcNAc...) asparagine glycosylation is present at Asn-243. One can recognise an LRRCT domain in the interval 311-362 (NLWECSARICALASWLGSFQGRWEHSILCHSPDHTQGEDILDAVHGFQLCWN). The N-linked (GlcNAc...) asparagine glycan is linked to Asn-362. Residues 423–443 (VITGTMALLFSFFFIIFIVFI) form a helical membrane-spanning segment. Residues 444 to 516 (SRKCCPPTLR…QQLPYKECEV (73 aa)) are Cytoplasmic-facing. Residues 513-516 (ECEV) carry the Involved in DLG4-binding motif.

This sequence belongs to the LRRTM family. As to quaternary structure, interacts with DLG4. Interacts with neurexin NRXN1; interaction is mediated by heparan sulfate glycan modification on neurexin. Expressed in neuronal tissues.

It localises to the cell membrane. It is found in the postsynaptic cell membrane. Involved in the development and maintenance of excitatory synapses in the vertebrate nervous system. Regulates surface expression of AMPA receptors and instructs the development of functional glutamate release sites. Acts as a ligand for the presynaptic receptors NRXN1-A and NRXN1-B. In Homo sapiens (Human), this protein is Leucine-rich repeat transmembrane neuronal protein 2 (LRRTM2).